The primary structure comprises 158 residues: 6,7-dimethyl-8-ribityllumazine synthase (158 aa).

5-amino-6-(D-ribitylamino)uracil-binding positions include Phe-18, 50–52 (SYD), and 74–76 (AVI). 79–80 (ET) provides a ligand contact to (2S)-2-hydroxy-3-oxobutyl phosphate. His-82 functions as the Proton donor in the catalytic mechanism. Leu-107 contacts 5-amino-6-(D-ribitylamino)uracil. Arg-122 is a binding site for (2S)-2-hydroxy-3-oxobutyl phosphate.

It belongs to the DMRL synthase family.

The catalysed reaction is (2S)-2-hydroxy-3-oxobutyl phosphate + 5-amino-6-(D-ribitylamino)uracil = 6,7-dimethyl-8-(1-D-ribityl)lumazine + phosphate + 2 H2O + H(+). Its pathway is cofactor biosynthesis; riboflavin biosynthesis; riboflavin from 2-hydroxy-3-oxobutyl phosphate and 5-amino-6-(D-ribitylamino)uracil: step 1/2. Its function is as follows. Catalyzes the formation of 6,7-dimethyl-8-ribityllumazine by condensation of 5-amino-6-(D-ribitylamino)uracil with 3,4-dihydroxy-2-butanone 4-phosphate. This is the penultimate step in the biosynthesis of riboflavin. The chain is 6,7-dimethyl-8-ribityllumazine synthase from Sulfolobus acidocaldarius (strain ATCC 33909 / DSM 639 / JCM 8929 / NBRC 15157 / NCIMB 11770).